The following is a 290-amino-acid chain: 4-hydroxybenzoate octaprenyltransferase (290 aa).

6 consecutive transmembrane segments (helical) span residues 41–61 (WPLLAIFVLGTLLMRSAGCAM), 89–109 (WEAVAIAVVLAFISFLLIQPL), 133–153 (FFAIPQAYLGIAFGFGIPMAF), 158–178 (DTVPMLAWVMLIANIFWSVAY), 202–224 (FGRFDVAAVMLCYAATLGIYVWI), and 269–289 (WLGGVLFAGIAAHYLLAGTAG).

Belongs to the UbiA prenyltransferase family. Mg(2+) is required as a cofactor.

The protein localises to the cell inner membrane. It carries out the reaction all-trans-octaprenyl diphosphate + 4-hydroxybenzoate = 4-hydroxy-3-(all-trans-octaprenyl)benzoate + diphosphate. It participates in cofactor biosynthesis; ubiquinone biosynthesis. Functionally, catalyzes the prenylation of para-hydroxybenzoate (PHB) with an all-trans polyprenyl group. Mediates the second step in the final reaction sequence of ubiquinone-8 (UQ-8) biosynthesis, which is the condensation of the polyisoprenoid side chain with PHB, generating the first membrane-bound Q intermediate 3-octaprenyl-4-hydroxybenzoate. In Burkholderia ambifaria (strain ATCC BAA-244 / DSM 16087 / CCUG 44356 / LMG 19182 / AMMD) (Burkholderia cepacia (strain AMMD)), this protein is 4-hydroxybenzoate octaprenyltransferase.